The chain runs to 534 residues: MASTSLSLPSLKLQFPSHTSSSSRKNSSSYRVSIRPIQASVSEIPPYISSPSQSPSSSSSPPVKQAKLPAQKVPGDYGLPLVGPWKDRLDYFYNQGKNEFFKSRIQKHQSTVFRTNMPPGPFISFNPNVVVLLDGKSFPVLFDVSKVEKKDLFTGTFMPSTDLTGGYRVLSYLDPSEPNHAKLKKLMFYLLSSRRNEVIPEFHNSYSELFETLENELSTKGKAGLNAANDQAAFNFLARSLYGINPQDTELGTDGPKLIGKWVLFQLHPLLILGLPKVLEDLVMHTFRLPPALVKKDYQRLYNFFYENSTSVLDEAEKIGISREEACHNLLFATCFNSFGGIKIFFPNMLKWIGRAGAKLHSQLAQEIRSVISSNSGKVTMAAMEKMPLMKSVVYESLRIEPPVASQYGRAKHDMVIESHDASFEIKEGELLYGYQPFATKDPKIFDRSEEFVADRFIGEEGEKLLKHVLWSNGSETENASINNKQCAGKDFVVLVSRLLLVELFLRYDSFEIEVGASPLGAAITLTSLRRASF.

Disordered stretches follow at residues 1 to 31 (MASTSLSLPSLKLQFPSHTSSSSRKNSSSYR) and 43 to 71 (EIPPYISSPSQSPSSSSSPPVKQAKLPAQ). The transit peptide at 1-69 (MASTSLSLPS…SPPVKQAKLP (69 aa)) directs the protein to the chloroplast. Low complexity-rich tracts occupy residues 17–31 (SHTSSSSRKNSSSYR) and 43–62 (EIPPYISSPSQSPSSSSSPP). Heme b-binding residues include Lys149, His180, and Lys184. Residues Asn337 and Lys343 each contribute to the (13S)-hydroperoxy-(9Z,11E)-octadecadienoate site. (13S)-hydroperoxy-(9Z,11E,15Z)-octadecatrienoate is bound at residue Asn337. Heme b contacts are provided by Lys485 and Cys487.

The protein belongs to the cytochrome P450 family. It depends on heme b as a cofactor. In terms of tissue distribution, expressed in flowers. Detected in stems and roots, but not in leaves and fruits under non-inducing conditions.

The protein resides in the plastid. It localises to the chloroplast. It catalyses the reaction (13S)-hydroperoxy-(9Z,11E,15Z)-octadecatrienoate = (9Z,13S,15Z)-12,13-epoxyoctadeca-9,11,15-trienoate + H2O. It carries out the reaction (13S)-hydroperoxy-(9Z,11E)-octadecadienoate = (9Z,13S)-12,13-epoxyoctadeca-9,11-dienoate + H2O. Its function is as follows. Cytochrome P450 of the CYP74A subfamily involved in the biosynthesis of jasmonic acid from lipoxygenase-derived hydroperoxides of free fatty acids. Catalyzes the synthesis of unstable allene oxide, which is further converted spontaneously by hydrolysis or cyclization. Can use 13S-hydroperoxy-9(Z),11(E),15(Z)-octadecatrienoic acid (13-HPOT) and 13S-hydroperoxy-9(Z),11(E)-octadecadienoic acid (13-HPOD) as substrates. The polypeptide is Allene oxide synthase 1, chloroplastic (Solanum lycopersicum (Tomato)).